The following is a 65-amino-acid chain: Alpha-insect toxin BotIT1 (65 aa).

Residues 2–64 (RDAYIAQNYN…VPIRIPGKCH (63 aa)) enclose the LCN-type CS-alpha/beta domain. 4 disulfide bridges follow: Cys-12-Cys-63, Cys-16-Cys-36, Cys-22-Cys-46, and Cys-26-Cys-48.

It belongs to the long (4 C-C) scorpion toxin superfamily. Sodium channel inhibitor family. Alpha subfamily. As to expression, expressed by the venom gland.

Its subcellular location is the secreted. Its function is as follows. Alpha toxins bind voltage-independently at site-3 of sodium channels (Nav) and inhibit the inactivation of the activated channels, thereby blocking neuronal transmission. This contractive toxin is highly toxic to insects and barely toxic to mammals. The chain is Alpha-insect toxin BotIT1 from Buthus occitanus tunetanus (Common European scorpion).